The primary structure comprises 2581 residues: Chromodomain-helicase-DNA-binding protein 8 (2581 aa).

Disordered stretches follow at residues 22 to 114 (DDSF…QTST), 253 to 281 (VKGS…TPAQ), and 349 to 375 (QKIQ…PLTL). Composition is skewed to polar residues over residues 42–64 (SLDS…SSAS) and 94–114 (DYTT…QTST). Over residues 255 to 267 (GSAPAGNPGATGP) the composition is skewed to low complexity. Residues 355–370 (PQPPSSQPQPQPPPSA) are compositionally biased toward pro residues. At serine 432 the chain carries Phosphoserine. Disordered stretches follow at residues 473-584 (RARG…KRKK) and 596-616 (DEEE…ILPE). Residues 493-516 (RPEEEGEKKRRKKSSGERLKEEKP) are compositionally biased toward basic and acidic residues. Serine 553 and serine 562 each carry phosphoserine. A compositionally biased stretch (basic residues) spans 572 to 584 (QKRRSNRQVKRKK). A Glycyl lysine isopeptide (Lys-Gly) (interchain with G-Cter in SUMO) cross-link involves residue lysine 609. 2 consecutive Chromo domains span residues 642–709 (AIVD…AQMR) and 724–790 (VEVD…RVNR). In terms of domain architecture, Helicase ATP-binding spans 823–997 (LFNWYNRQNC…FSLLHFLEPS (175 aa)). 836–843 (DEMGLGKT) provides a ligand contact to ATP. A DEAH box motif is present at residues 948 to 951 (DEAH). Positions 1137–1288 (LIDKLLPKLK…KAVLQSMSGR (152 aa)) constitute a Helicase C-terminal domain. Phosphoserine is present on residues serine 1420 and serine 1424. The tract at residues 1692–1713 (EDPEYKPLQGPPKDPDDEGDPL) is disordered. Residues 1789–2302 (IARREKQQRW…LVELEVECME (514 aa)) form an interaction with FAM124B region. Phosphoserine is present on residues serine 1976 and serine 1978. The interval 1988–2016 (QCTSRTASPSPLRPDVPAEKSPEENAVQV) is disordered. Threonine 1993 carries the phosphothreonine modification. Phosphoserine is present on residues serine 1995, serine 1997, and serine 2008. Lysine 2025 participates in a covalent cross-link: Glycyl lysine isopeptide (Lys-Gly) (interchain with G-Cter in SUMO2). 2 disordered regions span residues 2047 to 2118 (SSDT…YDEE) and 2179 to 2221 (NRRS…SSSA). Positions 2063–2072 (EDDDDSDSEL) are enriched in acidic residues. Residues serine 2068 and serine 2070 each carry the phosphoserine modification. Low complexity predominate over residues 2075–2094 (SKLSPSSSSSSSSSSSSSSS). A compositionally biased stretch (basic and acidic residues) spans 2102 to 2116 (EEKLTADRSRPKLYD). Phosphoserine is present on residues serine 2182, serine 2200, and serine 2202. At threonine 2204 the chain carries Phosphothreonine. Serine 2211 is subject to Phosphoserine. Position 2215 is a phosphothreonine (threonine 2215). Position 2223 is a phosphoserine (serine 2223). Lysine 2256 participates in a covalent cross-link: Glycyl lysine isopeptide (Lys-Gly) (interchain with G-Cter in SUMO2). A disordered region spans residues 2484-2581 (PHVDSSTMLH…NSDSSDDADD (98 aa)). The span at 2492-2510 (LHHHHHHPHPHHHHHHHPG) shows a compositional bias: basic residues. Positions 2513-2528 (TTGYPSSPATTTSGTA) are enriched in low complexity. Serine 2519 carries the phosphoserine modification. Over residues 2537 to 2550 (EDDDEEEDEDDDDL) the composition is skewed to acidic residues. A compositionally biased stretch (low complexity) spans 2565–2574 (DDPMMPANSD).

It belongs to the SNF2/RAD54 helicase family. CHD8 subfamily. In terms of assembly, interacts with p53/TP53, histone H1 and CTCF. Component of some MLL1/MLL complex, at least composed of the core components KMT2A/MLL1, ASH2L, HCFC1/HCF1, WDR5 and RBBP5, as well as the facultative components BACC1, CHD8, E2F6, HSP70, INO80C, KANSL1, LAS1L, MAX, MCRS1, MGA, KAT8/MOF, PELP1, PHF20, PRP31, RING2, RUVB1/TIP49A, RUVB2/TIP49B, SENP3, TAF1, TAF4, TAF6, TAF7, TAF9 and TEX10. Interacts with CHD7. Interacts with FAM124B. Interacts with CTNNB1. Interacts with PIAS3. Interacts with TLK2. Interacts with HNRNPL in an RNA-dependent manner. Sumoylated.

Its subcellular location is the nucleus. The enzyme catalyses ATP + H2O = ADP + phosphate + H(+). Its function is as follows. ATP-dependent chromatin-remodeling factor, it slides nucleosomes along DNA; nucleosome sliding requires ATP. Acts as a transcription repressor by remodeling chromatin structure and recruiting histone H1 to target genes. Suppresses p53/TP53-mediated apoptosis by recruiting histone H1 and preventing p53/TP53 transactivation activity. Acts as a negative regulator of Wnt signaling pathway by regulating beta-catenin (CTNNB1) activity. Negatively regulates CTNNB1-targeted gene expression by being recruited specifically to the promoter regions of several CTNNB1 responsive genes. Involved in both enhancer blocking and epigenetic remodeling at chromatin boundary via its interaction with CTCF. Acts as a suppressor of STAT3 activity by suppressing the LIF-induced STAT3 transcriptional activity. Also acts as a transcription activator via its interaction with ZNF143 by participating in efficient U6 RNA polymerase III transcription. Regulates alternative splicing of a core group of genes involved in neuronal differentiation, cell cycle and DNA repair. Enables H3K36me3-coupled transcription elongation and co-transcriptional RNA processing likely via interaction with HNRNPL. In Rattus norvegicus (Rat), this protein is Chromodomain-helicase-DNA-binding protein 8.